Reading from the N-terminus, the 100-residue chain is Urease subunit gamma (100 aa).

It belongs to the urease gamma subunit family. In terms of assembly, heterotrimer of UreA (gamma), UreB (beta) and UreC (alpha) subunits. Three heterotrimers associate to form the active enzyme.

It is found in the cytoplasm. The catalysed reaction is urea + 2 H2O + H(+) = hydrogencarbonate + 2 NH4(+). It participates in nitrogen metabolism; urea degradation; CO(2) and NH(3) from urea (urease route): step 1/1. This Pseudomonas syringae pv. syringae (strain B728a) protein is Urease subunit gamma.